A 377-amino-acid polypeptide reads, in one-letter code: UPF0754 membrane protein lin2327 (377 aa).

2 consecutive transmembrane segments (helical) span residues 1–21 (MSVL…GAMT) and 357–377 (YLGG…AMWI).

This sequence belongs to the UPF0754 family.

It is found in the cell membrane. The sequence is that of UPF0754 membrane protein lin2327 from Listeria innocua serovar 6a (strain ATCC BAA-680 / CLIP 11262).